The sequence spans 923 residues: Ubiquitin carboxyl-terminal hydrolase 10 (923 aa).

The DUSP domain maps to 19–134 (FTPEEEKRIV…GGPPIERKLI (116 aa)). The disordered stretch occupies residues 65–91 (NECSTGESSEAPRPGPIDNHDIIESDS). The USP domain occupies 304–895 (AGLSNLGNTC…AAYVLFYRRV (592 aa)). Cys-313 acts as the Nucleophile in catalysis. His-853 serves as the catalytic Proton acceptor.

Belongs to the peptidase C19 family.

The catalysed reaction is Thiol-dependent hydrolysis of ester, thioester, amide, peptide and isopeptide bonds formed by the C-terminal Gly of ubiquitin (a 76-residue protein attached to proteins as an intracellular targeting signal).. In terms of biological role, recognizes and hydrolyzes the peptide bond at the C-terminal Gly of ubiquitin. Involved in the processing of poly-ubiquitin precursors as well as that of ubiquitinated proteins. This Arabidopsis thaliana (Mouse-ear cress) protein is Ubiquitin carboxyl-terminal hydrolase 10 (UBP10).